A 244-amino-acid polypeptide reads, in one-letter code: MFKWLMSSLCGTKNPASLEEVYEPIMGGKNPATMLRLQSALAAVNALLPATLTIEDVISSADNTRRLVKAQTLARTYQACQHNIECLSRHRASSDNPNLNAVVATHMANAKRLSDTCLAALMHLYLSVGAVDATTDTMVDHAIRMTAENSVVMADVAVLEKTLGLEPQPSVMAHDLLALESSVYNSGNSVPVNDYPAEDVESTQSVHSPLLSKRPSNTEVVCSSIPVKSNLKSKPRRKPSLVAA.

The S-palmitoyl cysteine; by host moiety is linked to residue Cys10.

It belongs to the herpesviridae UL51 family. In terms of assembly, oligomerizes. Interacts with ORF55; this interaction mediates ORF55 incorporation to virions. In terms of processing, phosphorylated. Palmitoylation is necessary for Golgi localization.

It is found in the virion tegument. The protein localises to the host cytoplasm. The protein resides in the host Golgi apparatus. Plays several roles during the time course of infection, including egress of virus particles from the perinuclear space and secondary envelopment of cytoplasmic capsids that bud into specific trans-Golgi network (TGN)-derived membranes. This is Tegument protein UL51 homolog (8) from Equus caballus (Horse).